Reading from the N-terminus, the 180-residue chain is Free methionine-R-sulfoxide reductase (180 aa).

Residues 99–177 (GVCGTAASTK…KLAKLINKSC (79 aa)) enclose the GAF domain.

It belongs to the free Met sulfoxide reductase family.

Its subcellular location is the cytoplasm. The protein localises to the nucleus. The enzyme catalyses [thioredoxin]-disulfide + L-methionine + H2O = L-methionine (R)-S-oxide + [thioredoxin]-dithiol. In terms of biological role, catalyzes the reversible oxidation-reduction of the R-enantiomer of free methionine sulfoxide to methionine. Does not act on S-enantiomer of free methionine sulfoxide or R-enantiomer of dabsylated methionine sulfoxide. Involved in protection against oxidative stress. This chain is Free methionine-R-sulfoxide reductase, found in Saccharomyces cerevisiae (strain ATCC 204508 / S288c) (Baker's yeast).